The primary structure comprises 696 residues: Polyribonucleotide nucleotidyltransferase (696 aa).

The Mg(2+) site is built by Asp486 and Asp492. The 60-residue stretch at 553–612 (PRIIVRNIPKDRIGELIGPGGKNVRGISELTGAELYIEDDGRVTISGSNQESAEKAAKMV) folds into the KH domain. In terms of domain architecture, S1 motif spans 622 to 690 (GKIYEGKVKR…KTGKIDLSRK (69 aa)).

This sequence belongs to the polyribonucleotide nucleotidyltransferase family. Mg(2+) serves as cofactor.

It localises to the cytoplasm. The catalysed reaction is RNA(n+1) + phosphate = RNA(n) + a ribonucleoside 5'-diphosphate. Involved in mRNA degradation. Catalyzes the phosphorolysis of single-stranded polyribonucleotides processively in the 3'- to 5'-direction. The polypeptide is Polyribonucleotide nucleotidyltransferase (Leptospira borgpetersenii serovar Hardjo-bovis (strain JB197)).